A 282-amino-acid chain; its full sequence is Homeobox protein pv.1 (282 aa).

2 stretches are compositionally biased toward basic and acidic residues: residues 17–26 and 44–59; these read EEAADGKDSM and YAKE…DVQE. The segment at 17–128 is disordered; the sequence is EEAADGKDSM…HRGESPKSDL (112 aa). Composition is skewed to polar residues over residues 86–96 and 103–114; these read WGSSDDFSSVG and EGSPSPMRNSQE. Basic and acidic residues predominate over residues 116-128; sequence ETDHRGESPKSDL. Residues 129 to 188 constitute a DNA-binding region (homeobox); sequence QRHLRTAFTPQQISKLEQAFNKQRYLGASERKKLATSLRLSEIQVKTWFQNRRMKLKRQI.

In terms of tissue distribution, expressed in the ventral marginal zone of blastulae. At early gastrulation, expression begins to spread to the animal pole (ectoderm), and at stage 11.5 is expressed in a gradient across the animal cap, with levels highest in the ventral region. At the end of gastrulation, predominantly localized to the ventral and lateral regions of the closing slit blastopore. Also expressed at a low level in ventral endoderm.

The protein resides in the nucleus. Its function is as follows. Transcriptional repressor. Acts in a ventral signaling pathway downstream of bmp4, which suppresses dorsal mesoderm formation and leads to both ventral mesoderm and ventral ectoderm formation. Acts in the ectoderm to simultaneously specify epidermal lineages and restrict neuralization. Represses transcription of dorsal-specific genes. Binds to DNA, with preference for the target sequences 5'-TAATGC-3' and 5'-TAATTG-3'. Acts in a pathway downstream of bmp4 and fgf to negatively regulate erythroid specification. This chain is Homeobox protein pv.1, found in Xenopus laevis (African clawed frog).